A 635-amino-acid chain; its full sequence is Threonine--tRNA ligase (635 aa).

Residues 1–58 (MIQVTCDQKNYEVLEGTTAAELAKQLKNSHQFIGVLINERPRDLSTHLNEGDTLVFLT) enclose the TGS domain. The segment at 237-528 (DHRVLGAKLD…LIENFKGRFP (292 aa)) is catalytic. Residues Cys328, His379, and His505 each coordinate Zn(2+).

The protein belongs to the class-II aminoacyl-tRNA synthetase family. Homodimer. Zn(2+) is required as a cofactor.

It localises to the cytoplasm. It catalyses the reaction tRNA(Thr) + L-threonine + ATP = L-threonyl-tRNA(Thr) + AMP + diphosphate + H(+). Functionally, catalyzes the attachment of threonine to tRNA(Thr) in a two-step reaction: L-threonine is first activated by ATP to form Thr-AMP and then transferred to the acceptor end of tRNA(Thr). Also edits incorrectly charged L-seryl-tRNA(Thr). In Chlamydia pneumoniae (Chlamydophila pneumoniae), this protein is Threonine--tRNA ligase.